A 393-amino-acid chain; its full sequence is Putative acid--amine ligase HI_0929 (393 aa).

Arg103–Asp105 serves as a coordination point for ATP. Residues Asp105, Glu117, and Asn119 each contribute to the Mg(2+) site. ATP contacts are provided by residues Lys267, Lys303, Gly310, Gln343, and Ala378 to Thr380.

It belongs to the glutathionylspermidine synthase preATP-grasp family.

Its function is as follows. May be a ligase forming an amide bond. Shows ATPase activity. The protein is Putative acid--amine ligase HI_0929 of Haemophilus influenzae (strain ATCC 51907 / DSM 11121 / KW20 / Rd).